The following is a 137-amino-acid chain: Phosphoribosyl-AMP cyclohydrolase (137 aa).

Residue Asp84 coordinates Mg(2+). Residue Cys85 coordinates Zn(2+). Residues Asp86 and Asp88 each contribute to the Mg(2+) site. Zn(2+) contacts are provided by Cys101 and Cys108.

Belongs to the PRA-CH family. In terms of assembly, homodimer. It depends on Mg(2+) as a cofactor. Requires Zn(2+) as cofactor.

It is found in the cytoplasm. It carries out the reaction 1-(5-phospho-beta-D-ribosyl)-5'-AMP + H2O = 1-(5-phospho-beta-D-ribosyl)-5-[(5-phospho-beta-D-ribosylamino)methylideneamino]imidazole-4-carboxamide. It functions in the pathway amino-acid biosynthesis; L-histidine biosynthesis; L-histidine from 5-phospho-alpha-D-ribose 1-diphosphate: step 3/9. Its function is as follows. Catalyzes the hydrolysis of the adenine ring of phosphoribosyl-AMP. This Chlorobium phaeovibrioides (strain DSM 265 / 1930) (Prosthecochloris vibrioformis (strain DSM 265)) protein is Phosphoribosyl-AMP cyclohydrolase.